A 156-amino-acid chain; its full sequence is 6,7-dimethyl-8-ribityllumazine synthase (156 aa).

5-amino-6-(D-ribitylamino)uracil is bound by residues phenylalanine 23, 57 to 59 (AFE), and 81 to 83 (AVI). 86–87 (ST) serves as a coordination point for (2S)-2-hydroxy-3-oxobutyl phosphate. The active-site Proton donor is the histidine 89. 5-amino-6-(D-ribitylamino)uracil is bound at residue phenylalanine 114. Arginine 128 is a binding site for (2S)-2-hydroxy-3-oxobutyl phosphate.

It belongs to the DMRL synthase family.

It catalyses the reaction (2S)-2-hydroxy-3-oxobutyl phosphate + 5-amino-6-(D-ribitylamino)uracil = 6,7-dimethyl-8-(1-D-ribityl)lumazine + phosphate + 2 H2O + H(+). The protein operates within cofactor biosynthesis; riboflavin biosynthesis; riboflavin from 2-hydroxy-3-oxobutyl phosphate and 5-amino-6-(D-ribitylamino)uracil: step 1/2. In terms of biological role, catalyzes the formation of 6,7-dimethyl-8-ribityllumazine by condensation of 5-amino-6-(D-ribitylamino)uracil with 3,4-dihydroxy-2-butanone 4-phosphate. This is the penultimate step in the biosynthesis of riboflavin. This is 6,7-dimethyl-8-ribityllumazine synthase from Campylobacter fetus subsp. fetus (strain 82-40).